We begin with the raw amino-acid sequence, 335 residues long: Legumin type B (335 aa).

2 disordered regions span residues Pro-47–Val-87 and Thr-102–Gly-155. A compositionally biased stretch (basic and acidic residues) spans Asp-105–Asn-118. Residues Gln-135 to Glu-144 are compositionally biased toward acidic residues. The 148-residue stretch at Glu-167–Thr-314 folds into the Cupin type-1 domain.

This sequence belongs to the 11S seed storage protein (globulins) family. Hexamer; each subunit is composed of an acidic and a basic chain derived from a single precursor and linked by a disulfide bond.

Its function is as follows. This protein found in the seeds of many leguminous and non-leguminous plants is the source of sulfur-containing amino acids in seed meals. This chain is Legumin type B (LEB2), found in Vicia faba (Broad bean).